Reading from the N-terminus, the 148-residue chain is PTS system fructose-like EIIA component (148 aa).

Residues Ala-2–Thr-145 form the PTS EIIA type-2 domain. Catalysis depends on His-64, which acts as the Tele-phosphohistidine intermediate. Residue His-64 is modified to Phosphohistidine; by HPr.

The protein resides in the cytoplasm. In terms of biological role, the phosphoenolpyruvate-dependent sugar phosphotransferase system (sugar PTS), a major carbohydrate active transport system, catalyzes the phosphorylation of incoming sugar substrates concomitantly with their translocation across the cell membrane. The enzyme II FrvAB PTS system is involved in fructose transport. The sequence is that of PTS system fructose-like EIIA component from Escherichia coli (strain K12).